Reading from the N-terminus, the 272-residue chain is Ribonuclease HII (272 aa).

Residues 87 to 272 (KYVAGVDEVG…HRMSFLKNIL (186 aa)) form the RNase H type-2 domain. A divalent metal cation-binding residues include D93, E94, and D188.

The protein belongs to the RNase HII family. The cofactor is Mn(2+). Mg(2+) serves as cofactor.

Its subcellular location is the cytoplasm. It catalyses the reaction Endonucleolytic cleavage to 5'-phosphomonoester.. In terms of biological role, endonuclease that specifically degrades the RNA of RNA-DNA hybrids. The sequence is that of Ribonuclease HII from Clostridium perfringens (strain 13 / Type A).